A 271-amino-acid polypeptide reads, in one-letter code: Phycocyanobilin lyase subunit alpha (271 aa).

The protein belongs to the CpcE/RpcE/PecE family. CpcE and CpcF associate to form a lyase.

In terms of biological role, required for the chromophorylation of the cpcA1 gene product. This is Phycocyanobilin lyase subunit alpha (cpcE1) from Pseudanabaena tenuis (strain PCC 7409).